We begin with the raw amino-acid sequence, 1389 residues long: DNA-directed RNA polymerase subunit beta'' (1389 aa).

Zn(2+)-binding residues include Cys224, Cys295, Cys302, and Cys305.

It belongs to the RNA polymerase beta' chain family. RpoC2 subfamily. As to quaternary structure, in plastids the minimal PEP RNA polymerase catalytic core is composed of four subunits: alpha, beta, beta', and beta''. When a (nuclear-encoded) sigma factor is associated with the core the holoenzyme is formed, which can initiate transcription. Requires Zn(2+) as cofactor.

The protein localises to the plastid. Its subcellular location is the chloroplast. The enzyme catalyses RNA(n) + a ribonucleoside 5'-triphosphate = RNA(n+1) + diphosphate. Its function is as follows. DNA-dependent RNA polymerase catalyzes the transcription of DNA into RNA using the four ribonucleoside triphosphates as substrates. This Morus indica (Mulberry) protein is DNA-directed RNA polymerase subunit beta''.